A 154-amino-acid chain; its full sequence is Ribosomal RNA large subunit methyltransferase H (154 aa).

Residues Leu-70, Gly-102, and 121–126 (LSRMTL) contribute to the S-adenosyl-L-methionine site.

This sequence belongs to the RNA methyltransferase RlmH family. As to quaternary structure, homodimer.

Its subcellular location is the cytoplasm. The enzyme catalyses pseudouridine(1915) in 23S rRNA + S-adenosyl-L-methionine = N(3)-methylpseudouridine(1915) in 23S rRNA + S-adenosyl-L-homocysteine + H(+). Specifically methylates the pseudouridine at position 1915 (m3Psi1915) in 23S rRNA. This is Ribosomal RNA large subunit methyltransferase H from Citrifermentans bemidjiense (strain ATCC BAA-1014 / DSM 16622 / JCM 12645 / Bem) (Geobacter bemidjiensis).